Consider the following 279-residue polypeptide: Thymidylate synthase (279 aa).

Residue 133–134 (RR) coordinates dUMP. Cysteine 154 serves as the catalytic Nucleophile. DUMP is bound by residues 178–181 (RSND), asparagine 189, and 219–221 (HIY). Aspartate 181 serves as a coordination point for (6R)-5,10-methylene-5,6,7,8-tetrahydrofolate. Residue alanine 278 participates in (6R)-5,10-methylene-5,6,7,8-tetrahydrofolate binding.

It belongs to the thymidylate synthase family. Bacterial-type ThyA subfamily. Homodimer.

It localises to the cytoplasm. The catalysed reaction is dUMP + (6R)-5,10-methylene-5,6,7,8-tetrahydrofolate = 7,8-dihydrofolate + dTMP. Its pathway is pyrimidine metabolism; dTTP biosynthesis. In terms of biological role, catalyzes the reductive methylation of 2'-deoxyuridine-5'-monophosphate (dUMP) to 2'-deoxythymidine-5'-monophosphate (dTMP) while utilizing 5,10-methylenetetrahydrofolate (mTHF) as the methyl donor and reductant in the reaction, yielding dihydrofolate (DHF) as a by-product. This enzymatic reaction provides an intracellular de novo source of dTMP, an essential precursor for DNA biosynthesis. The chain is Thymidylate synthase from Streptococcus pneumoniae (strain ATCC 700669 / Spain 23F-1).